A 101-amino-acid chain; its full sequence is Aspartyl/glutamyl-tRNA(Asn/Gln) amidotransferase subunit C (101 aa).

It belongs to the GatC family. In terms of assembly, heterotrimer of A, B and C subunits.

It carries out the reaction L-glutamyl-tRNA(Gln) + L-glutamine + ATP + H2O = L-glutaminyl-tRNA(Gln) + L-glutamate + ADP + phosphate + H(+). The catalysed reaction is L-aspartyl-tRNA(Asn) + L-glutamine + ATP + H2O = L-asparaginyl-tRNA(Asn) + L-glutamate + ADP + phosphate + 2 H(+). Functionally, allows the formation of correctly charged Asn-tRNA(Asn) or Gln-tRNA(Gln) through the transamidation of misacylated Asp-tRNA(Asn) or Glu-tRNA(Gln) in organisms which lack either or both of asparaginyl-tRNA or glutaminyl-tRNA synthetases. The reaction takes place in the presence of glutamine and ATP through an activated phospho-Asp-tRNA(Asn) or phospho-Glu-tRNA(Gln). The polypeptide is Aspartyl/glutamyl-tRNA(Asn/Gln) amidotransferase subunit C (Enterococcus faecalis (strain ATCC 700802 / V583)).